The primary structure comprises 302 residues: MAIADLTLSKSHAGSWRRYYELGKPKVVALILFTALVGMLLSVPGMVPWHTMLFGLLGIGLAAASGAALNHVIDRRIDAVMDRTRNRPLPTGQLETQKALVFAIAMGVVAMGILVLAVNVLTAVLTFFALIGYAVIYTVFLKRTTPQNIVWGGLAGALPPLLGWVAVTGQITVEPLLLVLLIFVWTPPHFWALAIRRREDYARAGIPMLPVTHGVAFTKLQVLLYTLMLLTVSLVPFIIHMTGLIYLVGALALGIGFVFHAYRLWRSPDDRYAMPTFGYSIFYLTAMFALLLVDHYVRMMMA.

9 helical membrane-spanning segments follow: residues 27–47 (VVAL…PGMV), 53–73 (LFGL…NHVI), 100–120 (LVFA…AVNV), 121–141 (LTAV…TVFL), 149–169 (IVWG…AVTG), 175–195 (PLLL…ALAI), 215–235 (VAFT…VSLV), 237–257 (FIIH…GIGF), and 273–293 (AMPT…LLLV).

It belongs to the UbiA prenyltransferase family. Protoheme IX farnesyltransferase subfamily.

The protein resides in the cell inner membrane. The catalysed reaction is heme b + (2E,6E)-farnesyl diphosphate + H2O = Fe(II)-heme o + diphosphate. The protein operates within porphyrin-containing compound metabolism; heme O biosynthesis; heme O from protoheme: step 1/1. Its function is as follows. Converts heme B (protoheme IX) to heme O by substitution of the vinyl group on carbon 2 of heme B porphyrin ring with a hydroxyethyl farnesyl side group. This is Protoheme IX farnesyltransferase from Thioalkalivibrio sulfidiphilus (strain HL-EbGR7).